A 515-amino-acid chain; its full sequence is 2-isopropylmalate synthase (515 aa).

Positions 4 to 266 (IKFFDTTLRD…ETRLNLQEIK (263 aa)) constitute a Pyruvate carboxyltransferase domain. The Mn(2+) site is built by Asp-13, His-201, His-203, and Asn-237. The segment at 391-515 (QLSSIQVQYG…RGENEKVATP (125 aa)) is regulatory domain.

It belongs to the alpha-IPM synthase/homocitrate synthase family. LeuA type 1 subfamily. In terms of assembly, homodimer. It depends on Mn(2+) as a cofactor.

It is found in the cytoplasm. It catalyses the reaction 3-methyl-2-oxobutanoate + acetyl-CoA + H2O = (2S)-2-isopropylmalate + CoA + H(+). Its pathway is amino-acid biosynthesis; L-leucine biosynthesis; L-leucine from 3-methyl-2-oxobutanoate: step 1/4. Catalyzes the condensation of the acetyl group of acetyl-CoA with 3-methyl-2-oxobutanoate (2-ketoisovalerate) to form 3-carboxy-3-hydroxy-4-methylpentanoate (2-isopropylmalate). This Geobacillus kaustophilus (strain HTA426) protein is 2-isopropylmalate synthase.